Reading from the N-terminus, the 87-residue chain is Guanine nucleotide-binding protein subunit gamma (87 aa).

The residue at position 84 (C84) is a Cysteine methyl ester. C84 carries S-geranylgeranyl cysteine lipidation. The propeptide at 85–87 (LLV) is removed in mature form.

Belongs to the G protein gamma family. In terms of assembly, g proteins are composed of 3 units, alpha, beta and gamma. The N-terminus is blocked.

It is found in the cell membrane. In terms of biological role, guanine nucleotide-binding proteins (G proteins) are involved as a modulator or transducer in various transmembrane signaling systems. This major G-protein of the squid photoreceptor is involved in visual transduction. The beta and gamma chains are required for the GTPase activity, for replacement of GDP by GTP, and for G protein-effector interaction. This is Guanine nucleotide-binding protein subunit gamma from Loligo forbesii (Veined squid).